We begin with the raw amino-acid sequence, 159 residues long: Growth arrest and DNA damage-inducible protein GADD45 gamma (159 aa).

Positions 43–86 (VYESAKVLNVDPDNVTFCVLAADEEDEGDIALQIHFTLIQAFCC) are homodimerization.

It belongs to the GADD45 family. In terms of assembly, undergoes concentration-dependent homodimerization, which is required for growth inhibititory activity and enhances interaction with PCNA. Interacts with GADD45GIP1. Interacts with PCNA.

Functionally, involved in the regulation of growth and apoptosis. Mediates activation of stress-responsive MTK1/MEKK4 MAPKKK. This is Growth arrest and DNA damage-inducible protein GADD45 gamma (Gadd45g) from Rattus norvegicus (Rat).